The following is a 102-amino-acid chain: N(4)-acetylcytidine amidohydrolase (102 aa).

The ASCH domain occupies 6–92 (TFFGRFEADI…VIKAIYPGLD (87 aa)). Lysine 20 acts as the Proton acceptor in catalysis. The active-site Nucleophile is the threonine 23. Glutamate 73 serves as the catalytic Proton donor.

This sequence belongs to the N(4)-acetylcytidine amidohydrolase family.

The catalysed reaction is N(4)-acetylcytidine + H2O = cytidine + acetate + H(+). The enzyme catalyses N(4)-acetyl-2'-deoxycytidine + H2O = 2'-deoxycytidine + acetate + H(+). It carries out the reaction N(4)-acetylcytosine + H2O = cytosine + acetate + H(+). Its function is as follows. Catalyzes the hydrolysis of N(4)-acetylcytidine (ac4C). In Yersinia pseudotuberculosis serotype O:1b (strain IP 31758), this protein is N(4)-acetylcytidine amidohydrolase.